Here is a 729-residue protein sequence, read N- to C-terminus: Fatty acid oxidation complex subunit alpha (729 aa).

Residues 1–189 (MLYKGDTLYL…KIGLVDGVVK (189 aa)) form an enoyl-CoA hydratase/isomerase region. Asp296 serves as a coordination point for substrate. Residues 311–729 (ETPKQAAVLG…ARPVGSLKTA (419 aa)) are 3-hydroxyacyl-CoA dehydrogenase. NAD(+)-binding positions include Met324, Asp343, 400–402 (VVE), Lys407, and Ser429. The active-site For 3-hydroxyacyl-CoA dehydrogenase activity is His450. Asn453 serves as a coordination point for NAD(+). Residues Asn500 and Tyr660 each coordinate substrate. Residues 708 to 729 (RHNEPYYPPVEPARPVGSLKTA) are disordered.

The protein in the N-terminal section; belongs to the enoyl-CoA hydratase/isomerase family. This sequence in the C-terminal section; belongs to the 3-hydroxyacyl-CoA dehydrogenase family. Heterotetramer of two alpha chains (FadB) and two beta chains (FadA).

It catalyses the reaction a (3S)-3-hydroxyacyl-CoA + NAD(+) = a 3-oxoacyl-CoA + NADH + H(+). It carries out the reaction a (3S)-3-hydroxyacyl-CoA = a (2E)-enoyl-CoA + H2O. The enzyme catalyses a 4-saturated-(3S)-3-hydroxyacyl-CoA = a (3E)-enoyl-CoA + H2O. The catalysed reaction is (3S)-3-hydroxybutanoyl-CoA = (3R)-3-hydroxybutanoyl-CoA. It catalyses the reaction a (3Z)-enoyl-CoA = a 4-saturated (2E)-enoyl-CoA. It carries out the reaction a (3E)-enoyl-CoA = a 4-saturated (2E)-enoyl-CoA. Its pathway is lipid metabolism; fatty acid beta-oxidation. Functionally, involved in the aerobic and anaerobic degradation of long-chain fatty acids via beta-oxidation cycle. Catalyzes the formation of 3-oxoacyl-CoA from enoyl-CoA via L-3-hydroxyacyl-CoA. It can also use D-3-hydroxyacyl-CoA and cis-3-enoyl-CoA as substrate. This Salmonella gallinarum (strain 287/91 / NCTC 13346) protein is Fatty acid oxidation complex subunit alpha.